Reading from the N-terminus, the 337-residue chain is Inositol 2-dehydrogenase (337 aa).

It belongs to the Gfo/Idh/MocA family. In terms of assembly, homotetramer.

It carries out the reaction myo-inositol + NAD(+) = scyllo-inosose + NADH + H(+). In terms of biological role, involved in the oxidation of myo-inositol (MI) to 2-keto-myo-inositol (2KMI or 2-inosose). This is Inositol 2-dehydrogenase from Ralstonia nicotianae (strain ATCC BAA-1114 / GMI1000) (Ralstonia solanacearum).